A 188-amino-acid chain; its full sequence is V-type ATP synthase subunit E (188 aa).

Belongs to the V-ATPase E subunit family.

Its function is as follows. Produces ATP from ADP in the presence of a proton gradient across the membrane. The chain is V-type ATP synthase subunit E from Thermus thermophilus (strain ATCC BAA-163 / DSM 7039 / HB27).